Reading from the N-terminus, the 206-residue chain is Small ribosomal subunit protein uS4A (206 aa).

Positions 98–164 (MRLDNVVYRL…EKFKTFAENP (67 aa)) constitute an S4 RNA-binding domain.

It belongs to the universal ribosomal protein uS4 family. As to quaternary structure, part of the 30S ribosomal subunit. Contacts protein S5. The interaction surface between S4 and S5 is involved in control of translational fidelity.

Functionally, one of the primary rRNA binding proteins, it binds directly to 16S rRNA where it nucleates assembly of the body of the 30S subunit. Its function is as follows. With S5 and S12 plays an important role in translational accuracy. This chain is Small ribosomal subunit protein uS4A, found in Clostridium botulinum (strain ATCC 19397 / Type A).